A 434-amino-acid polypeptide reads, in one-letter code: Chaperone SurA (434 aa).

Residues 1–22 form the signal peptide; that stretch reads MKHSKKIVTALLALAMSQTVMA. PpiC domains follow at residues 173–274 and 283–383; these read EVEF…KVMD and VEEV…QLMD.

Its subcellular location is the periplasm. It carries out the reaction [protein]-peptidylproline (omega=180) = [protein]-peptidylproline (omega=0). Functionally, chaperone involved in the correct folding and assembly of outer membrane proteins. Recognizes specific patterns of aromatic residues and the orientation of their side chains, which are found more frequently in integral outer membrane proteins. May act in both early periplasmic and late outer membrane-associated steps of protein maturation. This is Chaperone SurA from Shewanella denitrificans (strain OS217 / ATCC BAA-1090 / DSM 15013).